Consider the following 477-residue polypeptide: MAAQSGRVTQVIGAVVDVQFEGHLPAILNSLETKNGGNRLVLEVAQHLGESTVRTIAMDTTEGLVRGQEVTDTGSPIRVPVGEGTLGRIINVIGEPIDEAGPVKSEGLRAIHQEAPTYTDQSTEAEILVTGIKVVDLLAPYAKGGKIGLFGGAGVGKTVLIQELINNVAKAHGGYSVFAGVGERTREGNDLYHEFIESKVNADPHNPDPSVKSKCALVFGQMNEPPGARARVALTGLTIAEDFRDKGQDVLFFVDNIFRFTQAGSEVSALLGRIPSAVGYQPTLATDMGALQERITTTQKGSITSVQAIYVPADDLTDPAPATSFAHLDATTTLSRSIAEKGIYPAVDPLDSTSRMLSPLVVGEEHYAVARQVQQVLQRYKALQDIIAILGMDELSEEDKLTVARARKVERFMSQPFHVAEIFTGSPGKFVDLADTIKGFKGLVEGKYDHLPEAAFYMVGTIEEAVEKGKKLAAEAA.

151–158 provides a ligand contact to ATP; the sequence is GGAGVGKT.

This sequence belongs to the ATPase alpha/beta chains family. As to quaternary structure, F-type ATPases have 2 components, CF(1) - the catalytic core - and CF(0) - the membrane proton channel. CF(1) has five subunits: alpha(3), beta(3), gamma(1), delta(1), epsilon(1). CF(0) has three main subunits: a(1), b(2) and c(9-12). The alpha and beta chains form an alternating ring which encloses part of the gamma chain. CF(1) is attached to CF(0) by a central stalk formed by the gamma and epsilon chains, while a peripheral stalk is formed by the delta and b chains.

It localises to the cell inner membrane. It carries out the reaction ATP + H2O + 4 H(+)(in) = ADP + phosphate + 5 H(+)(out). In terms of biological role, produces ATP from ADP in the presence of a proton gradient across the membrane. The catalytic sites are hosted primarily by the beta subunits. The protein is ATP synthase subunit beta of Bradyrhizobium diazoefficiens (strain JCM 10833 / BCRC 13528 / IAM 13628 / NBRC 14792 / USDA 110).